We begin with the raw amino-acid sequence, 478 residues long: Cytochrome c-552 (478 aa).

Positions 1–27 (MKKQWTRRSAAAIAMVTTLLLSSHSFA) are cleaved as a signal peptide. His-91 lines the heme c pocket. Heme-binding residues include Cys-119, Cys-122, and Lys-123. The heme c site is built by Cys-157, Cys-160, His-161, Cys-206, Cys-209, and His-210. Residues Glu-212, Tyr-213, Lys-258, and Gln-260 each contribute to the Ca(2+) site. Tyr-213 serves as a coordination point for substrate. Position 261 (His-261) interacts with substrate. Residues His-272, Cys-279, Cys-282, His-283, His-298, Cys-311, Cys-314, His-315, and His-390 each coordinate heme c.

Belongs to the cytochrome c-552 family. The cofactor is Ca(2+). It depends on heme c as a cofactor.

The protein localises to the periplasm. It catalyses the reaction 6 Fe(III)-[cytochrome c] + NH4(+) + 2 H2O = 6 Fe(II)-[cytochrome c] + nitrite + 8 H(+). It participates in nitrogen metabolism; nitrate reduction (assimilation). Functionally, catalyzes the reduction of nitrite to ammonia, consuming six electrons in the process. In Aliivibrio salmonicida (strain LFI1238) (Vibrio salmonicida (strain LFI1238)), this protein is Cytochrome c-552.